Reading from the N-terminus, the 327-residue chain is Acetyl-coenzyme A carboxylase carboxyl transferase subunit beta (327 aa).

A CoA carboxyltransferase N-terminal domain is found at 24–293; the sequence is LWIKCPDTGQ…LTVTTAVEAP (270 aa). Residues 293–311 show a composition bias toward low complexity; sequence PAEAAAKAEPEATTTEQPG. The disordered stretch occupies residues 293-327; sequence PAEAAAKAEPEATTTEQPGAPAPTEPPAQPAAPQA. A compositionally biased stretch (pro residues) spans 312-327; the sequence is APAPTEPPAQPAAPQA.

Belongs to the AccD/PCCB family. Acetyl-CoA carboxylase is a heterohexamer composed of biotin carboxyl carrier protein (AccB), biotin carboxylase (AccC) and two subunits each of ACCase subunit alpha (AccA) and ACCase subunit beta (AccD).

It localises to the cytoplasm. It catalyses the reaction N(6)-carboxybiotinyl-L-lysyl-[protein] + acetyl-CoA = N(6)-biotinyl-L-lysyl-[protein] + malonyl-CoA. It participates in lipid metabolism; malonyl-CoA biosynthesis; malonyl-CoA from acetyl-CoA: step 1/1. Functionally, component of the acetyl coenzyme A carboxylase (ACC) complex. Biotin carboxylase (BC) catalyzes the carboxylation of biotin on its carrier protein (BCCP) and then the CO(2) group is transferred by the transcarboxylase to acetyl-CoA to form malonyl-CoA. This Rhodopseudomonas palustris (strain ATCC BAA-98 / CGA009) protein is Acetyl-coenzyme A carboxylase carboxyl transferase subunit beta.